Here is a 128-residue protein sequence, read N- to C-terminus: Glycine cleavage system H protein (128 aa).

One can recognise a Lipoyl-binding domain in the interval 23 to 105 (VATVGISDHA…YEGGWLFKVQ (83 aa)). Residue K64 is modified to N6-lipoyllysine.

Belongs to the GcvH family. In terms of assembly, the glycine cleavage system is composed of four proteins: P, T, L and H. The cofactor is (R)-lipoate.

The glycine cleavage system catalyzes the degradation of glycine. The H protein shuttles the methylamine group of glycine from the P protein to the T protein. This Alcanivorax borkumensis (strain ATCC 700651 / DSM 11573 / NCIMB 13689 / SK2) protein is Glycine cleavage system H protein.